The primary structure comprises 206 residues: Ribosomal RNA large subunit methyltransferase E (206 aa).

The S-adenosyl-L-methionine site is built by Gly-63, Trp-65, Asp-83, Asp-99, and Asp-124. Lys-164 acts as the Proton acceptor in catalysis.

The protein belongs to the class I-like SAM-binding methyltransferase superfamily. RNA methyltransferase RlmE family.

It localises to the cytoplasm. The enzyme catalyses uridine(2552) in 23S rRNA + S-adenosyl-L-methionine = 2'-O-methyluridine(2552) in 23S rRNA + S-adenosyl-L-homocysteine + H(+). In terms of biological role, specifically methylates the uridine in position 2552 of 23S rRNA at the 2'-O position of the ribose in the fully assembled 50S ribosomal subunit. The protein is Ribosomal RNA large subunit methyltransferase E of Buchnera aphidicola subsp. Acyrthosiphon pisum (strain APS) (Acyrthosiphon pisum symbiotic bacterium).